Here is a 155-residue protein sequence, read N- to C-terminus: Ribosome maturation factor RimP (155 aa).

It belongs to the RimP family.

It localises to the cytoplasm. In terms of biological role, required for maturation of 30S ribosomal subunits. The protein is Ribosome maturation factor RimP of Prochlorococcus marinus (strain SARG / CCMP1375 / SS120).